The sequence spans 508 residues: Photosystem II CP47 reaction center protein (508 aa).

6 helical membrane passes run 21 to 36 (SVHI…WAGS), 101 to 115 (IVFS…IWHW), 140 to 156 (GIHL…FGAF), 203 to 218 (IAAG…FHLS), 237 to 252 (VLSS…AFVV), and 457 to 472 (TFAL…HGAR).

It belongs to the PsbB/PsbC family. PsbB subfamily. As to quaternary structure, PSII is composed of 1 copy each of membrane proteins PsbA, PsbB, PsbC, PsbD, PsbE, PsbF, PsbH, PsbI, PsbJ, PsbK, PsbL, PsbM, PsbT, PsbX, PsbY, PsbZ, Psb30/Ycf12, at least 3 peripheral proteins of the oxygen-evolving complex and a large number of cofactors. It forms dimeric complexes. It depends on Binds multiple chlorophylls. PSII binds additional chlorophylls, carotenoids and specific lipids. as a cofactor.

It localises to the plastid. It is found in the chloroplast thylakoid membrane. Its function is as follows. One of the components of the core complex of photosystem II (PSII). It binds chlorophyll and helps catalyze the primary light-induced photochemical processes of PSII. PSII is a light-driven water:plastoquinone oxidoreductase, using light energy to abstract electrons from H(2)O, generating O(2) and a proton gradient subsequently used for ATP formation. This is Photosystem II CP47 reaction center protein from Chloranthus spicatus (Chulantree).